We begin with the raw amino-acid sequence, 750 residues long: Photosystem I P700 chlorophyll a apoprotein A1 (750 aa).

8 consecutive transmembrane segments (helical) span residues 70–93 (IFSA…FHGA), 156–179 (LYCT…FHYH), 195–219 (LNHH…HVSL), 291–309 (IAHH…GHMY), 346–369 (WHAQ…HHMY), 385–411 (LSLF…IFMV), 433–455 (AIIS…LYIH), and 531–549 (FLVH…LILL). The [4Fe-4S] cluster site is built by C573 and C582. Transmembrane regions (helical) follow at residues 589–610 (HVFL…HFSW) and 664–686 (LSAY…MFLF). H675 provides a ligand contact to chlorophyll a'. Chlorophyll a is bound by residues M683 and Y691. Phylloquinone is bound at residue W692. The chain crosses the membrane as a helical span at residues 724 to 744 (AVGVTHYLLGGIATTWAFFLA).

The protein belongs to the PsaA/PsaB family. The PsaA/B heterodimer binds the P700 chlorophyll special pair and subsequent electron acceptors. PSI consists of a core antenna complex that captures photons, and an electron transfer chain that converts photonic excitation into a charge separation. The eukaryotic PSI reaction center is composed of at least 11 subunits. The cofactor is P700 is a chlorophyll a/chlorophyll a' dimer, A0 is one or more chlorophyll a, A1 is one or both phylloquinones and FX is a shared 4Fe-4S iron-sulfur center..

It is found in the plastid. The protein resides in the chloroplast thylakoid membrane. It carries out the reaction reduced [plastocyanin] + hnu + oxidized [2Fe-2S]-[ferredoxin] = oxidized [plastocyanin] + reduced [2Fe-2S]-[ferredoxin]. In terms of biological role, psaA and PsaB bind P700, the primary electron donor of photosystem I (PSI), as well as the electron acceptors A0, A1 and FX. PSI is a plastocyanin-ferredoxin oxidoreductase, converting photonic excitation into a charge separation, which transfers an electron from the donor P700 chlorophyll pair to the spectroscopically characterized acceptors A0, A1, FX, FA and FB in turn. Oxidized P700 is reduced on the lumenal side of the thylakoid membrane by plastocyanin. This chain is Photosystem I P700 chlorophyll a apoprotein A1, found in Nandina domestica (Heavenly bamboo).